Here is a 247-residue protein sequence, read N- to C-terminus: UPF0246 protein CD630_18230 (247 aa).

Belongs to the UPF0246 family.

The polypeptide is UPF0246 protein CD630_18230 (Clostridioides difficile (strain 630) (Peptoclostridium difficile)).